Consider the following 105-residue polypeptide: UPF0145 protein HD_1349 (105 aa).

This sequence belongs to the UPF0145 family.

The protein is UPF0145 protein HD_1349 of Haemophilus ducreyi (strain 35000HP / ATCC 700724).